A 248-amino-acid chain; its full sequence is MLLIPAIDLKDGQCVRLKQGDMDQATVFSEDPAAMARHWVEQGARRLHLVDLNGAFVGKPRNEAAIKSIIAEVGDEIPVQLGGGIRDLNTIERWLDDGLSYVIIGTAAVKNPGFLKDACSAFGGHIIVGLDAKDGKVATDGWSKLTGHEVADLARKYEDYGVEAIIYTDIGRDGMLQGINIDATVKLAQSMSIPVIASGGLSNLADIDNLCAVEGEGVEGVICGRAIYSGDLNFADAQARADKLRDGQ.

The active-site Proton acceptor is D8. The active-site Proton donor is D131.

The protein belongs to the HisA/HisF family.

Its subcellular location is the cytoplasm. The enzyme catalyses 1-(5-phospho-beta-D-ribosyl)-5-[(5-phospho-beta-D-ribosylamino)methylideneamino]imidazole-4-carboxamide = 5-[(5-phospho-1-deoxy-D-ribulos-1-ylimino)methylamino]-1-(5-phospho-beta-D-ribosyl)imidazole-4-carboxamide. It functions in the pathway amino-acid biosynthesis; L-histidine biosynthesis; L-histidine from 5-phospho-alpha-D-ribose 1-diphosphate: step 4/9. This chain is 1-(5-phosphoribosyl)-5-[(5-phosphoribosylamino)methylideneamino] imidazole-4-carboxamide isomerase, found in Cupriavidus taiwanensis (strain DSM 17343 / BCRC 17206 / CCUG 44338 / CIP 107171 / LMG 19424 / R1) (Ralstonia taiwanensis (strain LMG 19424)).